Here is a 632-residue protein sequence, read N- to C-terminus: Biosynthetic arginine decarboxylase (632 aa).

Lys-101 is modified (N6-(pyridoxal phosphate)lysine). 281–291 (FDVGGGLGVDY) serves as a coordination point for substrate.

The protein belongs to the Orn/Lys/Arg decarboxylase class-II family. SpeA subfamily. It depends on Mg(2+) as a cofactor. Requires pyridoxal 5'-phosphate as cofactor.

The catalysed reaction is L-arginine + H(+) = agmatine + CO2. It functions in the pathway amine and polyamine biosynthesis; agmatine biosynthesis; agmatine from L-arginine: step 1/1. In terms of biological role, catalyzes the biosynthesis of agmatine from arginine. In Klebsiella pneumoniae (strain 342), this protein is Biosynthetic arginine decarboxylase.